The following is a 156-amino-acid chain: Small ribosomal subunit protein uS7 (156 aa).

Belongs to the universal ribosomal protein uS7 family. In terms of assembly, part of the 30S ribosomal subunit. Contacts proteins S9 and S11.

One of the primary rRNA binding proteins, it binds directly to 16S rRNA where it nucleates assembly of the head domain of the 30S subunit. Is located at the subunit interface close to the decoding center, probably blocks exit of the E-site tRNA. The sequence is that of Small ribosomal subunit protein uS7 from Clostridium beijerinckii (strain ATCC 51743 / NCIMB 8052) (Clostridium acetobutylicum).